We begin with the raw amino-acid sequence, 270 residues long: Phosphatidylinositol transfer protein alpha isoform (270 aa).

A 1,2-diacyl-sn-glycero-3-phospho-(1D-myo-inositol)-binding residues include threonine 58, lysine 60, glutamate 85, asparagine 89, threonine 96, and lysine 194. Position 215 is an N6-acetyllysine (lysine 215). A compositionally biased stretch (basic and acidic residues) spans 250–263; that stretch reads TKRQLDEMRQKDPV. The disordered stretch occupies residues 250-270; it reads TKRQLDEMRQKDPVKGMTADD.

Belongs to the PtdIns transfer protein family. PI transfer class I subfamily. Phosphorylated by PKC in a calcium and phosphatidylserine-dependent manner.

It is found in the cytoplasm. Its subcellular location is the nucleus. It catalyses the reaction a 1,2-diacyl-sn-glycero-3-phosphocholine(in) = a 1,2-diacyl-sn-glycero-3-phosphocholine(out). The enzyme catalyses a 1,2-diacyl-sn-glycero-3-phospho-(1D-myo-inositol)(in) = a 1,2-diacyl-sn-glycero-3-phospho-(1D-myo-inositol)(out). Its function is as follows. Catalyzes the transfer of phosphatidylinositol (PI) and phosphatidylcholine (PC) between membranes. Shows a preference for PI and PC containing shorter saturated or monosaturated acyl chains at the sn-1 and sn-2 positions. Preference order for PC is C16:1 &gt; C16:0 &gt; C18:1 &gt; C18:0 &gt; C20:4 and for PI is C16:1 &gt; C16:0 &gt; C18:1 &gt; C18:0 &gt; C20:4 &gt; C20:3. The protein is Phosphatidylinositol transfer protein alpha isoform (PITPNA) of Oryctolagus cuniculus (Rabbit).